Here is a 102-residue protein sequence, read N- to C-terminus: Glutaredoxin-C14 (102 aa).

In terms of domain architecture, Glutaredoxin spans 1-101; that stretch reads MDKVMRMSSE…PLIKPYQSFH (101 aa). Cysteines 21 and 24 form a disulfide.

The protein belongs to the glutaredoxin family. CC-type subfamily.

Its subcellular location is the cytoplasm. Functionally, has a glutathione-disulfide oxidoreductase activity in the presence of NADPH and glutathione reductase. Reduces low molecular weight disulfides and proteins. This Arabidopsis thaliana (Mouse-ear cress) protein is Glutaredoxin-C14 (GRXC14).